The chain runs to 130 residues: Small ribosomal subunit protein uS8 (130 aa).

It belongs to the universal ribosomal protein uS8 family. As to quaternary structure, part of the 30S ribosomal subunit. Contacts proteins S5 and S12.

One of the primary rRNA binding proteins, it binds directly to 16S rRNA central domain where it helps coordinate assembly of the platform of the 30S subunit. The protein is Small ribosomal subunit protein uS8 of Hahella chejuensis (strain KCTC 2396).